The sequence spans 313 residues: MSKSTIRIATRQSPLAMWQALYVKEQLQIAHPSLVVELVPMVTKGDIILDTPLAKVGGKGLFVKELELALLSSRADIAVHSMKDVPIDFPEGLGLVTICEREDPRDAFVSNHYDSLEQLPAGSVVGTSSLRRQCQLKALRPDLIIRDLRGNVGTRLSKLDNGDYDAIILAVAGLKRLKLTERIRSSLSAEQSLPAVGQGAVGIECRLDDHDTQALLAALNHADTATCVKAERAMNTRLEGGCQVPIGSYAIWQNGKIWLRALVGSPDGETILRGERLVSPEDAEQAGISLAEELLDKGAREILTAVYQGNTAI.

The residue at position 242 (cysteine 242) is an S-(dipyrrolylmethanemethyl)cysteine.

The protein belongs to the HMBS family. In terms of assembly, monomer. Dipyrromethane serves as cofactor.

The catalysed reaction is 4 porphobilinogen + H2O = hydroxymethylbilane + 4 NH4(+). The protein operates within porphyrin-containing compound metabolism; protoporphyrin-IX biosynthesis; coproporphyrinogen-III from 5-aminolevulinate: step 2/4. In terms of biological role, tetrapolymerization of the monopyrrole PBG into the hydroxymethylbilane pre-uroporphyrinogen in several discrete steps. This is Porphobilinogen deaminase from Proteus mirabilis (strain HI4320).